We begin with the raw amino-acid sequence, 237 residues long: Uridylate kinase (237 aa).

11 to 14 (KLSG) serves as a coordination point for ATP. UMP is bound at residue Gly-53. Residues Gly-54 and Arg-58 each coordinate ATP. UMP-binding positions include Asp-73 and 134-141 (TGNPFFTT). Positions 161, 167, and 170 each coordinate ATP.

It belongs to the UMP kinase family. In terms of assembly, homohexamer.

It is found in the cytoplasm. The catalysed reaction is UMP + ATP = UDP + ADP. The protein operates within pyrimidine metabolism; CTP biosynthesis via de novo pathway; UDP from UMP (UMPK route): step 1/1. Its activity is regulated as follows. Inhibited by UTP. In terms of biological role, catalyzes the reversible phosphorylation of UMP to UDP. The chain is Uridylate kinase from Burkholderia cenocepacia (strain HI2424).